Consider the following 343-residue polypeptide: Probable 4-hydroxy-tetrahydrodipicolinate reductase 1, chloroplastic (343 aa).

Residues 1–14 constitute a chloroplast transit peptide; that stretch reads MLASTFATHPAAAA. NAD(+)-binding positions include 167-169 and 190-193; these read GTT and SPQM. His-226 serves as the catalytic Proton donor/acceptor. The active-site Proton donor is Lys-230. 235-236 lines the (S)-2,3,4,5-tetrahydrodipicolinate pocket; that stretch reads GT.

Belongs to the DapB family.

It localises to the plastid. The protein localises to the chloroplast. It carries out the reaction (S)-2,3,4,5-tetrahydrodipicolinate + NAD(+) + H2O = (2S,4S)-4-hydroxy-2,3,4,5-tetrahydrodipicolinate + NADH + H(+). The catalysed reaction is (S)-2,3,4,5-tetrahydrodipicolinate + NADP(+) + H2O = (2S,4S)-4-hydroxy-2,3,4,5-tetrahydrodipicolinate + NADPH + H(+). It functions in the pathway amino-acid biosynthesis; L-lysine biosynthesis via DAP pathway; (S)-tetrahydrodipicolinate from L-aspartate: step 4/4. Functionally, catalyzes the conversion of 4-hydroxy-tetrahydrodipicolinate (HTPA) to tetrahydrodipicolinate. This chain is Probable 4-hydroxy-tetrahydrodipicolinate reductase 1, chloroplastic (DAPB1), found in Oryza sativa subsp. japonica (Rice).